The following is a 68-amino-acid chain: MRQGIHPEYHHDTVVKCACGNTFTTGSVKPELKVEICSKCHPFFTGKQKIVDVGGRVDKFNKRFNLNK.

Positions 17, 19, 37, and 40 each coordinate Zn(2+).

Belongs to the bacterial ribosomal protein bL31 family. Type A subfamily. Part of the 50S ribosomal subunit. The cofactor is Zn(2+).

Binds the 23S rRNA. In Clostridium perfringens (strain ATCC 13124 / DSM 756 / JCM 1290 / NCIMB 6125 / NCTC 8237 / Type A), this protein is Large ribosomal subunit protein bL31.